The chain runs to 522 residues: Amphoterin-induced protein 2 (522 aa).

Residues 1–39 form the signal peptide; sequence MSLRVHTLPTLLGAVVRPGCRELLCLLMITVAVGPGASG. The 29-residue stretch at 40-68 folds into the LRRNT domain; the sequence is VCPTACICATDIVSCTNKHLSKVPGNLFR. The Extracellular segment spans residues 40–398; sequence VCPTACICAT…RSHAHEAFNT (359 aa). Intrachain disulfides connect C41/C47 and C45/C54. 6 LRR repeats span residues 69–90, 94–115, 118–139, 142–163, 166–187, and 193–214; these read LMKR…WIPV, KLNT…SFST, NLKC…VFQE, VLEV…AFGG, QLQK…LYVG, and ELMF…HINL. An N-linked (GlcNAc...) asparagine glycan is attached at N104. Residues 228–284 enclose the LRRCT domain; it reads NPFVCDCSLYSLLVFWYRRHFSSVMDFKNDYTCRLWSDSRHSRQVLLLQDSFMNCSD. 2 cysteine pairs are disulfide-bonded: C232–C260 and C234–C282. N-linked (GlcNAc...) asparagine glycans are attached at residues N281, N288, N345, N373, N381, and N384. Positions 289-379 constitute an Ig-like C2-type domain; that stretch reads GSFRALGFIH…RLLNETVDVT (91 aa). C310 and C363 are disulfide-bonded. A helical membrane pass occupies residues 399–419; sequence AFTTLAACVASIVLVLLYLYL. The Cytoplasmic segment spans residues 420–522; sequence TPCPCKCKTK…FSDTPFVAST (103 aa). Residues 501–522 are disordered; it reads RGKSDSDSVNSVFSDTPFVAST.

This sequence belongs to the immunoglobulin superfamily. AMIGO family. As to quaternary structure, binds itself as well as AMIGO1 and AMIGO3.

It is found in the cell membrane. The protein resides in the nucleus. In terms of biological role, required for depolarization-dependent survival of cultured cerebellar granule neurons. May mediate homophilic as well as heterophilic cell-cell interaction with AMIGO1 or AMIGO3. May contribute to signal transduction through its intracellular domain. This chain is Amphoterin-induced protein 2, found in Pongo abelii (Sumatran orangutan).